We begin with the raw amino-acid sequence, 211 residues long: Ribonuclease HII (211 aa).

In terms of domain architecture, RNase H type-2 spans 11–200 (EFIAGVDEVG…VKKLLSTLLS (190 aa)). A divalent metal cation is bound by residues Asp-17, Glu-18, and Asp-109.

Belongs to the RNase HII family. Requires Mn(2+) as cofactor. The cofactor is Mg(2+).

The protein localises to the cytoplasm. It carries out the reaction Endonucleolytic cleavage to 5'-phosphomonoester.. In terms of biological role, endonuclease that specifically degrades the RNA of RNA-DNA hybrids. The protein is Ribonuclease HII of Histophilus somni (strain 2336) (Haemophilus somnus).